The chain runs to 580 residues: Putative Xaa-Pro dipeptidyl-peptidase (580 aa).

Active-site charge relay system residues include S207, D319, and H350.

The protein belongs to the peptidase S15 family.

The enzyme catalyses Hydrolyzes Xaa-Pro-|- bonds to release unblocked, N-terminal dipeptides from substrates including Ala-Pro-|-p-nitroanilide and (sequentially) Tyr-Pro-|-Phe-Pro-|-Gly-Pro-|-Ile.. The chain is Putative Xaa-Pro dipeptidyl-peptidase from Bacillus cereus (strain ATCC 14579 / DSM 31 / CCUG 7414 / JCM 2152 / NBRC 15305 / NCIMB 9373 / NCTC 2599 / NRRL B-3711).